Here is a 142-residue protein sequence, read N- to C-terminus: uncharacterized protein (142 aa).

Residues asparagine 29 and asparagine 67 are each glycosylated (N-linked (GlcNAc...) asparagine; by host). A helical membrane pass occupies residues 88–108; the sequence is VFYLGYPVIFIIGVTYFSIIA.

Its subcellular location is the membrane. This is an uncharacterized protein from Acanthamoeba polyphaga mimivirus (APMV).